The primary structure comprises 84 residues: Metallothionein-like protein 4A (84 aa).

A disordered region spans residues 1–26 (MADTGKGSSVAGCNDSCGCPSPCPGG).

Belongs to the metallothionein superfamily. Type 15 family. In terms of tissue distribution, expressed specifically in seeds.

The protein resides in the cytoplasm. It is found in the nucleus. Its subcellular location is the cell membrane. In terms of biological role, metallothioneins have a high content of cysteine residues that bind various heavy metals. Functions as a metal chelator of copper (Cu) and zinc (Zn). Plays a role in storing and distributing Zn ion in seed. The polypeptide is Metallothionein-like protein 4A (MT4A) (Arabidopsis thaliana (Mouse-ear cress)).